The primary structure comprises 139 residues: 6,7-dimethyl-8-ribityllumazine synthase (139 aa).

Residues F11, 42-44, and 66-68 contribute to the 5-amino-6-(D-ribitylamino)uracil site; these read ALE and VVI. Residue 71 to 72 participates in (2S)-2-hydroxy-3-oxobutyl phosphate binding; sequence ET. The active-site Proton donor is H74. N98 provides a ligand contact to 5-amino-6-(D-ribitylamino)uracil. R112 is a binding site for (2S)-2-hydroxy-3-oxobutyl phosphate.

Belongs to the DMRL synthase family.

It carries out the reaction (2S)-2-hydroxy-3-oxobutyl phosphate + 5-amino-6-(D-ribitylamino)uracil = 6,7-dimethyl-8-(1-D-ribityl)lumazine + phosphate + 2 H2O + H(+). The protein operates within cofactor biosynthesis; riboflavin biosynthesis; riboflavin from 2-hydroxy-3-oxobutyl phosphate and 5-amino-6-(D-ribitylamino)uracil: step 1/2. In terms of biological role, catalyzes the formation of 6,7-dimethyl-8-ribityllumazine by condensation of 5-amino-6-(D-ribitylamino)uracil with 3,4-dihydroxy-2-butanone 4-phosphate. This is the penultimate step in the biosynthesis of riboflavin. The chain is 6,7-dimethyl-8-ribityllumazine synthase from Zymomonas mobilis subsp. mobilis (strain ATCC 31821 / ZM4 / CP4).